The primary structure comprises 174 residues: Crossover junction endodeoxyribonuclease RuvC (174 aa).

Active-site residues include aspartate 16, glutamate 76, and aspartate 148. Positions 16, 76, and 148 each coordinate Mg(2+).

It belongs to the RuvC family. In terms of assembly, homodimer which binds Holliday junction (HJ) DNA. The HJ becomes 2-fold symmetrical on binding to RuvC with unstacked arms; it has a different conformation from HJ DNA in complex with RuvA. In the full resolvosome a probable DNA-RuvA(4)-RuvB(12)-RuvC(2) complex forms which resolves the HJ. Mg(2+) is required as a cofactor.

It is found in the cytoplasm. It carries out the reaction Endonucleolytic cleavage at a junction such as a reciprocal single-stranded crossover between two homologous DNA duplexes (Holliday junction).. Its function is as follows. The RuvA-RuvB-RuvC complex processes Holliday junction (HJ) DNA during genetic recombination and DNA repair. Endonuclease that resolves HJ intermediates. Cleaves cruciform DNA by making single-stranded nicks across the HJ at symmetrical positions within the homologous arms, yielding a 5'-phosphate and a 3'-hydroxyl group; requires a central core of homology in the junction. The consensus cleavage sequence is 5'-(A/T)TT(C/G)-3'. Cleavage occurs on the 3'-side of the TT dinucleotide at the point of strand exchange. HJ branch migration catalyzed by RuvA-RuvB allows RuvC to scan DNA until it finds its consensus sequence, where it cleaves and resolves the cruciform DNA. In Rhodopseudomonas palustris (strain ATCC BAA-98 / CGA009), this protein is Crossover junction endodeoxyribonuclease RuvC.